A 310-amino-acid chain; its full sequence is Carbamate kinase 1 (310 aa).

The protein belongs to the carbamate kinase family.

The protein localises to the cytoplasm. The enzyme catalyses hydrogencarbonate + NH4(+) + ATP = carbamoyl phosphate + ADP + H2O + H(+). It participates in metabolic intermediate metabolism; carbamoyl phosphate degradation; CO(2) and NH(3) from carbamoyl phosphate: step 1/1. The protein is Carbamate kinase 1 (arcC1) of Staphylococcus aureus (strain MRSA252).